Consider the following 370-residue polypeptide: Sensor protein GtcS (370 aa).

2 helical membrane passes run 2–22 and 40–60; these read ITAYILFTVTVGVTNSIVFYL and AWIVAWRLMEMVIFALSVYLY. Residues 66–118 enclose the HAMP domain; sequence KRITGPLEKITDAIQKMREGEFAQRLCFKADYELTLIQEHFNEMVAHLEKTEA. The 223-residue stretch at 133-355 folds into the Histidine kinase domain; the sequence is DLSHDFKTPI…RLENDLPYRL (223 aa).

It localises to the cell membrane. It catalyses the reaction ATP + protein L-histidine = ADP + protein N-phospho-L-histidine.. In terms of biological role, member of the two-component regulatory system GtcS/GtcR which may act in the control of the transcription of the grs operon which encodes the multienzymes involved in the biosynthesis of the peptide antibiotic gramicidin S. Probably activates GtcR by phosphorylation. The protein is Sensor protein GtcS (gtcS) of Aneurinibacillus migulanus (Bacillus migulanus).